The chain runs to 793 residues: Protein PAT1 homolog (793 aa).

Residues serine 200 and serine 208 each carry the phosphoserine modification. Disordered regions lie at residues 203–256 (PPGS…TGNR) and 292–312 (MLQQ…GSQN). Residues 219–242 (PYQSGGPQMGSPNFSPFPNLQPQL) show a composition bias toward polar residues. Residues serine 342 and serine 343 each carry the phosphoserine modification. Residues 476 to 501 (RPLLEVDPPNSAKFGNAEHKPTDKPL) are disordered. The segment covering 491–501 (NAEHKPTDKPL) has biased composition (basic and acidic residues).

Interacts with MPK4 and SUMM2. Phosphorylated at Ser-208 by MPK4 upon flg22 elicitation. Phosphorylated at Ser-200, Ser-342 and Ser-343 upon flg22 elicitation.

The protein localises to the cytoplasm. The protein resides in the P-body. Functionally, activator of mRNA decapping. Involved in mRNA decay via decapping. Involved in disease resistance in response to biotrophic and necrotrophic pathogens. Is part of a signaling pathway including MPK4 and the disease resistance protein SUMM2. The chain is Protein PAT1 homolog from Arabidopsis thaliana (Mouse-ear cress).